Here is a 384-residue protein sequence, read N- to C-terminus: Ubiquitin-like modifier-activating enzyme 5 (384 aa).

Glycine 63, aspartate 84, lysine 107, asparagine 130, and asparagine 164 together coordinate ATP. Zn(2+)-binding residues include cysteine 206 and cysteine 209. The Glycyl thioester intermediate role is filled by cysteine 230. Cysteine 283 and cysteine 288 together coordinate Zn(2+). The disordered stretch occupies residues glutamate 352–glutamate 375.

This sequence belongs to the ubiquitin-activating E1 family. UBA5 subfamily.

In terms of biological role, E1-like enzyme which activates UFM1. This Drosophila persimilis (Fruit fly) protein is Ubiquitin-like modifier-activating enzyme 5.